The sequence spans 137 residues: Fluoride-specific ion channel FluC (137 aa).

Transmembrane regions (helical) follow at residues 11–31, 42–62, 75–95, and 107–127; these read IAVS…SLWF, GTLF…ALAL, LIAV…LDTF, and GFYW…GIIL. Positions 82 and 85 each coordinate Na(+).

Belongs to the fluoride channel Fluc/FEX (TC 1.A.43) family.

The protein resides in the cell inner membrane. The enzyme catalyses fluoride(in) = fluoride(out). Its activity is regulated as follows. Na(+) is not transported, but it plays an essential structural role and its presence is essential for fluoride channel function. Fluoride-specific ion channel. Important for reducing fluoride concentration in the cell, thus reducing its toxicity. In Trichormus variabilis (strain ATCC 29413 / PCC 7937) (Anabaena variabilis), this protein is Fluoride-specific ion channel FluC.